A 349-amino-acid polypeptide reads, in one-letter code: Histidinol-phosphate aminotransferase 1 (349 aa).

Lys213 carries the post-translational modification N6-(pyridoxal phosphate)lysine.

The protein belongs to the class-II pyridoxal-phosphate-dependent aminotransferase family. Histidinol-phosphate aminotransferase subfamily. As to quaternary structure, homodimer. Requires pyridoxal 5'-phosphate as cofactor.

It catalyses the reaction L-histidinol phosphate + 2-oxoglutarate = 3-(imidazol-4-yl)-2-oxopropyl phosphate + L-glutamate. The protein operates within amino-acid biosynthesis; L-histidine biosynthesis; L-histidine from 5-phospho-alpha-D-ribose 1-diphosphate: step 7/9. The sequence is that of Histidinol-phosphate aminotransferase 1 from Carboxydothermus hydrogenoformans (strain ATCC BAA-161 / DSM 6008 / Z-2901).